A 383-amino-acid polypeptide reads, in one-letter code: F-box/kelch-repeat protein At2g29830 (383 aa).

A disordered region spans residues 1–21; it reads MVVLSEIPGDPNEDNQNENPQ. The segment covering 11–21 has biased composition (acidic residues); that stretch reads PNEDNQNENPQ. The 47-residue stretch at 27–73 folds into the F-box domain; it reads LPILLQLPEELIASIVALIPRCHYPSLSLVSRAFRHLITSQELYVAR. Kelch repeat units lie at residues 130–178, 179–224, 226–272, 274–317, and 324–370; these read KMYV…IIDG, RIYV…FITY, VMQG…VVGD, LYAL…YTST, and KLVI…RDLP.

The protein is F-box/kelch-repeat protein At2g29830 of Arabidopsis thaliana (Mouse-ear cress).